Reading from the N-terminus, the 198-residue chain is Dual specificity protein phosphatase 14 (198 aa).

The region spanning 26–167 is the Tyrosine-protein phosphatase domain; sequence GIAQITSSLF…LIDYERQLFG (142 aa). The Phosphocysteine intermediate role is filled by Cys111.

It belongs to the protein-tyrosine phosphatase family. Non-receptor class dual specificity subfamily. Interacts with CD28.

The catalysed reaction is O-phospho-L-tyrosyl-[protein] + H2O = L-tyrosyl-[protein] + phosphate. It carries out the reaction O-phospho-L-seryl-[protein] + H2O = L-seryl-[protein] + phosphate. The enzyme catalyses O-phospho-L-threonyl-[protein] + H2O = L-threonyl-[protein] + phosphate. Involved in the inactivation of MAP kinases. Dephosphorylates ERK, JNK and p38 MAP-kinases. Plays a negative role in TCR signaling by dephosphorylating MAP3K7 adapter TAB1 leading to its inactivation. This Bos taurus (Bovine) protein is Dual specificity protein phosphatase 14 (DUSP14).